Consider the following 324-residue polypeptide: Annexin A3 (324 aa).

Annexin repeat units follow at residues 19 to 90 (FNPS…ALIT), 91 to 162 (APAV…TLAD), 174 to 246 (HLAK…AVVR), and 250 to 321 (NTPA…KICG). At Lys178 the chain carries N6-acetyllysine. Thr268 bears the Phosphothreonine mark.

It belongs to the annexin family.

Inhibitor of phospholipase A2, also possesses anti-coagulant properties. The sequence is that of Annexin A3 (Anxa3) from Rattus norvegicus (Rat).